Consider the following 919-residue polypeptide: Periodic tryptophan protein 2 homolog (919 aa).

WD repeat units lie at residues 12–50, 53–93, 94–132, 142–181, and 186–225; these read GTVY…SDTL, ATRY…LHHF, HFKG…REFN, GPYD…NLIY, and GHKD…EGLR. The tract at residues 238-267 is disordered; the sequence is QREEEEEEEEDQEGDRETTIRGKATPAEEE. Positions 240-251 are enriched in acidic residues; sequence EEEEEEEEDQEG. The segment covering 252–267 has biased composition (basic and acidic residues); it reads DRETTIRGKATPAEEE. WD repeat units follow at residues 286-325, 328-368, 371-410, 413-452, 456-498, 499-538, 541-580, 603-642, and 700-740; these read GDFN…LIHS, ISDQ…YVLK, GHFN…CFVT, EHSS…NFRT, PRPT…DVLS, GHEG…RTKE, ALTS…QTGS, AKGK…LMKR, and KPEI…DPFE. Residues 882 to 919 form a disordered region; it reads TKRSLDPLGSEEEAEASEDDSLHLLGGGGRDSEEEMLA. A compositionally biased stretch (acidic residues) spans 890-900; that stretch reads GSEEEAEASED. Residues S898 and S902 each carry the phosphoserine modification.

Belongs to the WD repeat PWP2 family. As to quaternary structure, part of the small subunit (SSU) processome, composed of more than 70 proteins and the RNA chaperone small nucleolar RNA (snoRNA) U3.

The protein localises to the nucleus. It is found in the nucleolus. Part of the small subunit (SSU) processome, first precursor of the small eukaryotic ribosomal subunit. During the assembly of the SSU processome in the nucleolus, many ribosome biogenesis factors, an RNA chaperone and ribosomal proteins associate with the nascent pre-rRNA and work in concert to generate RNA folding, modifications, rearrangements and cleavage as well as targeted degradation of pre-ribosomal RNA by the RNA exosome. The polypeptide is Periodic tryptophan protein 2 homolog (Homo sapiens (Human)).